A 375-amino-acid chain; its full sequence is G-protein coupled estrogen receptor 1 (375 aa).

Met1 carries the N-acetylmethionine modification. At 1–62 (MDATTPAQTV…QQYVIALFLS (62 aa)) the chain is on the extracellular side. N-linked (GlcNAc...) asparagine glycosylation is found at Asn32 and Asn44. Residues 63–84 (CLYTIFLFPIGFVGNILILVVN) form a helical membrane-spanning segment. Topologically, residues 85-96 (ISFREKMTIPDL) are cytoplasmic. A helical transmembrane segment spans residues 97-120 (YFINLAAADLILVADSLIEVFNLD). The Extracellular portion of the chain corresponds to 121–132 (EQYYDIAVLCTF). Cys130 and Cys207 are disulfide-bonded. A helical membrane pass occupies residues 133 to 153 (MSLFLQINMYSSVFFLTWMSF). Over 154–175 (DRYLALAKAMRCGLFRTKHHAR) the chain is Cytoplasmic. Residues 176–194 (LSCGLIWMASVSATLVPFT) form a helical membrane-spanning segment. Over 195–220 (AVHLRHTEEACFCFADVREVQWLEVT) the chain is Extracellular. The chain crosses the membrane as a helical span at residues 221 to 236 (LGFIMPFAIIGLCYSL). Residues 237–259 (IVRALIRAHRHRGLRPRRQKALR) lie on the Cytoplasmic side of the membrane. A helical membrane pass occupies residues 260 to 280 (MIFAVVLVFFICWLPENVFIS). Residues 281-306 (VHLLQWTQPGDTPCKQSFRHAYPLTG) lie on the Extracellular side of the membrane. The helical transmembrane segment at 307 to 327 (HIVNLAAFSNSCLNPLIYSFL) threads the bilayer. Residues 328-375 (GETFRDKLRLYVEQKTSLPALNRFCHATLKAVIPDSTEQSEVRFSSAV) are Cytoplasmic-facing.

It belongs to the G-protein coupled receptor 1 family. In terms of assembly, interacts with RAMP3; the interaction confers proper subcellular localization and function in cardioprotection. Interacts with KRT7 and KRT8. Interacts with EGFR; the interaction increases after agonist-induced stimulation in cancer-associated fibroblasts (CAF). Interacts with EGFR and ESR1. Interacts (via C-terminus tail motif) with DLG4 (via N-terminus tandem pair of PDZ domains); the interaction is direct and induces the increase of GPER1 protein levels residing at the plasma membrane surface in a estradiol-independent manner. Homodimer. Heterodimer; heterodimerizes with other G-protein-coupled receptor (GPCRs) like CRHR1, HTR1A and PAQR8. In terms of processing, ubiquitinated; ubiquitination occurs at the plasma membrane and leads to proteasome-mediated degradation. N-glycosylated. Expressed in brain, heart, spleen, preadipocytes, mature adipocytes and primary hippocampal neurons. Expressed in neurons of the hippocampus, hypothalamic paraventricular nucleus (PVH), supraoptic nucleus (SON) and the median eminence. Expressed in the nucleus ambiguous (at protein level). Expressed in brain, pituitary gland, adrenal medulla, renal pelvis, ovary, endothelial cells, visceral fat tissues and islets of Langerhans.

The protein localises to the nucleus. It is found in the cytoplasm. It localises to the perinuclear region. Its subcellular location is the cytoskeleton. The protein resides in the cell membrane. The protein localises to the endoplasmic reticulum membrane. It is found in the golgi apparatus membrane. It localises to the cell projection. Its subcellular location is the dendrite. The protein resides in the cytoplasmic vesicle membrane. The protein localises to the early endosome. It is found in the recycling endosome. It localises to the golgi apparatus. Its subcellular location is the trans-Golgi network. The protein resides in the dendritic spine membrane. The protein localises to the axon. It is found in the postsynaptic density. It localises to the mitochondrion membrane. Its function is as follows. G-protein coupled estrogen receptor that binds to 17-beta-estradiol (E2) with high affinity, leading to rapid and transient activation of numerous intracellular signaling pathways. Stimulates cAMP production, calcium mobilization and tyrosine kinase Src inducing the release of heparin-bound epidermal growth factor (HB-EGF) and subsequent transactivation of the epidermal growth factor receptor (EGFR), activating downstream signaling pathways such as PI3K/Akt and ERK/MAPK. Mediates pleiotropic functions among others in the cardiovascular, endocrine, reproductive, immune and central nervous systems. Has a role in cardioprotection by reducing cardiac hypertrophy and perivascular fibrosis in a RAMP3-dependent manner. Regulates arterial blood pressure by stimulating vasodilation and reducing vascular smooth muscle and microvascular endothelial cell proliferation. Plays a role in blood glucose homeostasis contributing to the insulin secretion response by pancreatic beta cells. Triggers mitochondrial apoptosis during pachytene spermatocyte differentiation. Stimulates uterine epithelial cell proliferation. Enhances uterine contractility in response to oxytocin. Contributes to thymic atrophy by inducing apoptosis. Attenuates TNF-mediated endothelial expression of leukocyte adhesion molecules. Promotes neuritogenesis in developing hippocampal neurons. Plays a role in acute neuroprotection against NMDA-induced excitotoxic neuronal death. Increases firing activity and intracellular calcium oscillations in luteinizing hormone-releasing hormone (LHRH) neurons. Inhibits early osteoblast proliferation at growth plate during skeletal development. Inhibits mature adipocyte differentiation and lipid accumulation. Involved in the recruitment of beta-arrestin 2 ARRB2 at the plasma membrane in epithelial cells. Also functions as a receptor for aldosterone mediating rapid regulation of vascular contractibility through the PI3K/ERK signaling pathway. Involved in cancer progression regulation. Stimulates cancer-associated fibroblast (CAF) proliferation by a rapid genomic response through the EGFR/ERK transduction pathway. Associated with EGFR, may act as a transcription factor activating growth regulatory genes (c-fos, cyclin D1). Promotes integrin alpha-5/beta-1 and fibronectin (FN) matrix assembly in breast cancer cells. This Mus musculus (Mouse) protein is G-protein coupled estrogen receptor 1 (Gper1).